Consider the following 330-residue polypeptide: Malate dehydrogenase (330 aa).

12 to 18 (GAAGQIG) lines the NAD(+) pocket. Arginine 93 and arginine 99 together coordinate substrate. Residues asparagine 106, glutamine 113, and 130–132 (VGN) contribute to the NAD(+) site. Asparagine 132 and arginine 166 together coordinate substrate. Histidine 191 functions as the Proton acceptor in the catalytic mechanism.

It belongs to the LDH/MDH superfamily. MDH type 2 family.

It carries out the reaction (S)-malate + NAD(+) = oxaloacetate + NADH + H(+). Functionally, catalyzes the reversible oxidation of malate to oxaloacetate. This Azoarcus sp. (strain BH72) protein is Malate dehydrogenase.